We begin with the raw amino-acid sequence, 355 residues long: Peptide chain release factor 1 (355 aa).

Position 231 is an N5-methylglutamine (Gln231). The disordered stretch occupies residues 283 to 303; it reads LAKESEARKSQVGSGDRSERI.

This sequence belongs to the prokaryotic/mitochondrial release factor family. Post-translationally, methylated by PrmC. Methylation increases the termination efficiency of RF1.

It is found in the cytoplasm. Peptide chain release factor 1 directs the termination of translation in response to the peptide chain termination codons UAG and UAA. This chain is Peptide chain release factor 1, found in Campylobacter lari (strain RM2100 / D67 / ATCC BAA-1060).